The following is a 266-amino-acid chain: Ribosomal RNA small subunit methyltransferase A (266 aa).

Asparagine 11, leucine 13, glycine 37, glutamate 57, aspartate 85, and asparagine 104 together coordinate S-adenosyl-L-methionine.

This sequence belongs to the class I-like SAM-binding methyltransferase superfamily. rRNA adenine N(6)-methyltransferase family. RsmA subfamily.

It is found in the cytoplasm. The enzyme catalyses adenosine(1518)/adenosine(1519) in 16S rRNA + 4 S-adenosyl-L-methionine = N(6)-dimethyladenosine(1518)/N(6)-dimethyladenosine(1519) in 16S rRNA + 4 S-adenosyl-L-homocysteine + 4 H(+). Specifically dimethylates two adjacent adenosines (A1518 and A1519) in the loop of a conserved hairpin near the 3'-end of 16S rRNA in the 30S particle. May play a critical role in biogenesis of 30S subunits. This Campylobacter jejuni subsp. jejuni serotype O:2 (strain ATCC 700819 / NCTC 11168) protein is Ribosomal RNA small subunit methyltransferase A.